A 261-amino-acid polypeptide reads, in one-letter code: MTTGLLQGKKGLITGIANNMSISWAIAQLAKKHGAELWFTYQSEVLEKRVKPLAEEIGCNFISELDVTNQKSISNLFNDIKEKWNSFDFLLHGMAFANKNELKGRYVETSLENFHNSLHISCYSLLELSRSAETLMHNGGSIVTLTYYGAEKVIPNYNIMGVAKAALEASVKYLANDMGENNIRVNAISAGPIKTLASSAISDFSTMLKSHAATAPLKRNITQEDVGGAAVYLFSELSKGVTGEIHYVDCGYNIIGSSKLL.

NAD(+) contacts are provided by residues glycine 15, 21-22 (SI), glutamine 42, 66-67 (DV), and methionine 94. Alanine 97 contributes to the substrate binding site. Residues tyrosine 147 and tyrosine 157 each act as proton acceptor in the active site. Residues lysine 164 and 193-197 (IKTLA) each bind NAD(+).

It belongs to the short-chain dehydrogenases/reductases (SDR) family. FabI subfamily. In terms of assembly, homotetramer.

The enzyme catalyses a 2,3-saturated acyl-[ACP] + NAD(+) = a (2E)-enoyl-[ACP] + NADH + H(+). It participates in lipid metabolism; fatty acid biosynthesis. Functionally, catalyzes the reduction of a carbon-carbon double bond in an enoyl moiety that is covalently linked to an acyl carrier protein (ACP). Involved in the elongation cycle of fatty acid which are used in the lipid metabolism. The chain is Enoyl-[acyl-carrier-protein] reductase [NADH] FabI (fabI) from Rickettsia prowazekii (strain Madrid E).